A 125-amino-acid polypeptide reads, in one-letter code: MRHYEIVFMVHPDQSEQVPGMIERYTGSVKEAGGQVHRLEDWGRRQLAYPINKLHKAHYVLMNVEVPQQVIDELETTFRYNDAVLRSLVIHTKHAVTEASPMKAAKEERKPLAEVENNDFEDAEE.

Positions 97 to 125 (TEASPMKAAKEERKPLAEVENNDFEDAEE) are disordered. Residues 104-113 (AAKEERKPLA) are compositionally biased toward basic and acidic residues. Residues 116–125 (ENNDFEDAEE) are compositionally biased toward acidic residues.

The protein belongs to the bacterial ribosomal protein bS6 family.

Its function is as follows. Binds together with bS18 to 16S ribosomal RNA. The polypeptide is Small ribosomal subunit protein bS6 (Haemophilus influenzae (strain PittEE)).